The sequence spans 332 residues: Cytochrome c oxidase subunit 2 (332 aa).

The first 20 residues, 1–20 (MKIPGSVITLLIGVVITVVS), serve as a signal peptide directing secretion. A run of 2 helical transmembrane segments spans residues 48 to 68 (MMTI…YCLI) and 87 to 107 (VPLE…LAVY). 4 residues coordinate Cu cation: His-214, Cys-249, Cys-253, and His-257.

The protein belongs to the cytochrome c oxidase subunit 2 family. Cu cation serves as cofactor.

It localises to the cell membrane. It catalyses the reaction 4 Fe(II)-[cytochrome c] + O2 + 8 H(+)(in) = 4 Fe(III)-[cytochrome c] + 2 H2O + 4 H(+)(out). Subunits I and II form the functional core of the enzyme complex. Electrons originating in cytochrome c are transferred via heme a and Cu(A) to the binuclear center formed by heme a3 and Cu(B). The chain is Cytochrome c oxidase subunit 2 (ctaC) from Synechocystis sp. (strain ATCC 27184 / PCC 6803 / Kazusa).